The sequence spans 52 residues: Large ribosomal subunit protein bL32c (52 aa).

This sequence belongs to the bacterial ribosomal protein bL32 family.

It localises to the plastid. It is found in the chloroplast. The polypeptide is Large ribosomal subunit protein bL32c (Capsella bursa-pastoris (Shepherd's purse)).